The primary structure comprises 74 residues: UPF0352 protein MS1910 (74 aa).

It belongs to the UPF0352 family.

This chain is UPF0352 protein MS1910, found in Mannheimia succiniciproducens (strain KCTC 0769BP / MBEL55E).